Consider the following 30-residue polypeptide: Uperin-6.1 (30 aa).

In terms of tissue distribution, expressed by the skin dorsal glands.

It localises to the secreted. This is Uperin-6.1 from Uperoleia inundata (Floodplain toadlet).